A 188-amino-acid polypeptide reads, in one-letter code: Phosphoribosylglycinamide formyltransferase (188 aa).

12–14 is a binding site for N(1)-(5-phospho-beta-D-ribosyl)glycinamide; the sequence is GSN. Residues K66, 91–94, and N108 contribute to the (6R)-10-formyltetrahydrofolate site; that span reads MRLV. H110 functions as the Proton donor in the catalytic mechanism.

Belongs to the GART family.

It catalyses the reaction N(1)-(5-phospho-beta-D-ribosyl)glycinamide + (6R)-10-formyltetrahydrofolate = N(2)-formyl-N(1)-(5-phospho-beta-D-ribosyl)glycinamide + (6S)-5,6,7,8-tetrahydrofolate + H(+). The protein operates within purine metabolism; IMP biosynthesis via de novo pathway; N(2)-formyl-N(1)-(5-phospho-D-ribosyl)glycinamide from N(1)-(5-phospho-D-ribosyl)glycinamide (10-formyl THF route): step 1/1. Its function is as follows. Catalyzes the transfer of a formyl group from 10-formyltetrahydrofolate to 5-phospho-ribosyl-glycinamide (GAR), producing 5-phospho-ribosyl-N-formylglycinamide (FGAR) and tetrahydrofolate. The chain is Phosphoribosylglycinamide formyltransferase from Staphylococcus epidermidis (strain ATCC 35984 / DSM 28319 / BCRC 17069 / CCUG 31568 / BM 3577 / RP62A).